The primary structure comprises 323 residues: Transcription factor LUX (323 aa).

3 disordered regions span residues 1–25 (MGEE…WEMG), 53–139 (ERSR…DLSG), and 267–298 (GYHH…ESNP). The segment covering 65–87 (SETTLSSLRGGSSGPNTSSSNNN) has biased composition (low complexity). The myb-like GARP DNA-binding region spans 139–200 (GKTLKRPRLV…HLQKYRLYLK (62 aa)).

Interacts with ELF3 and forms a complex with ELF3 and ELF4.

It localises to the nucleus. In terms of biological role, transcription factor that is essential for the generation of the circadian clock oscillation. Is necessary for activation of CCA1 and LHY expression. Is coregulated with TOC1 and seems to be repressed by CCA1 and LHY by direct binding of these proteins to the evening element in the LUX promoter. Directly regulates the expression of PRR9, a major component of the morning transcriptional feedback circuit, by binding specific sites on PRR9 promoter. Binds to its own promoter, inducing a negative auto-regulatory feedback loop within the core clock. Binds to ELF3 and associates with ELF4 in a diurnal complex which is required for the expression of the growth-promoting transcription factors PIF4 and PIF5 and subsequent hypocotyl growth in the early evening. In Arabidopsis thaliana (Mouse-ear cress), this protein is Transcription factor LUX (LUX).